The chain runs to 106 residues: Glycine/glutamate-rich protein sgp1 (106 aa).

An N-terminal signal peptide occupies residues 1–20; that stretch reads MKYSLIFILTLACLIASSLA. Positions 20–66 are disordered; that stretch reads ARPEGEEKPADDAAGDKKEEGAEGDKTAAGGDEGFTGGDGKNAGGAG. Positions 22–45 are enriched in basic and acidic residues; that stretch reads PEGEEKPADDAAGDKKEEGAEGDK. Positions 50 to 66 are enriched in gly residues; the sequence is GDEGFTGGDGKNAGGAG.

Its subcellular location is the secreted. This chain is Glycine/glutamate-rich protein sgp1 (sgp1), found in Glossina morsitans morsitans (Savannah tsetse fly).